A 348-amino-acid chain; its full sequence is uncharacterized protein (348 aa).

The interval 132–348 (SECRRSSDAL…QGTRRDSARL (217 aa)) is disordered. Positions 161–178 (STAPIPNAAISSARSSAR) are enriched in low complexity. Residues 192-207 (SRSSSETRSPGGTVQP) show a composition bias toward polar residues. Over residues 227–273 (AAGSLLPAPRPPASSASSPQAAAPAAPSATRLPRRTTPSAPRPSSRP) the composition is skewed to low complexity. Pro residues predominate over residues 274-287 (ARPPIPAARPPPRR). Residues 288–310 (TPGTPRPAAARARAPAGCSPARR) are compositionally biased toward low complexity.

This is an uncharacterized protein from Streptomyces fradiae (Streptomyces roseoflavus).